A 343-amino-acid chain; its full sequence is Sodium/bile acid cotransporter 7-A (343 aa).

Residues 1–10 are Cytoplasmic-facing; it reads MGLLERLRKE. The helical transmembrane segment at 11 to 31 threads the bilayer; that stretch reads WFIVGIILVIAAAKLEPTVGV. The Extracellular segment spans residues 32–37; it reads KGGPLK. The chain crosses the membrane as a helical span at residues 38–58; the sequence is PEITITYIAVSAIFFNSGLSL. Residues 59–71 are Cytoplasmic-facing; it reads KTEELTNALMHVK. A helical membrane pass occupies residues 72–92; it reads LHLFVQLFTLVFFPTAIWLFL. Over 93–116 the chain is Extracellular; sequence QVLSLTPINEWLLKGLQTVSCMPP. A helical transmembrane segment spans residues 117–137; sequence PVSSAVILTKAVGGNEAAAIF. Residue N138 is a topological domain, cytoplasmic. The helical transmembrane segment at 139 to 159 threads the bilayer; the sequence is SAFGSFLGIVVTPLLLLLFLG. The Extracellular segment spans residues 160–163; the sequence is SSSS. The helical transmembrane segment at 164–184 threads the bilayer; it reads VPFTSIFSQLFMTVVVPLIIG. At 185–201 the chain is on the cytoplasmic side; that stretch reads QIVRRYIKDWLERKKPP. The chain crosses the membrane as a helical span at residues 202–222; that stretch reads FGAISSCVLLMIIYTTFCDTF. Residues 223-234 lie on the Extracellular side of the membrane; the sequence is SNPNIDLDTFSL. Residues 235–255 traverse the membrane as a helical segment; sequence VVIVFIIFFIQLAFMLLTFLF. Residues 256 to 270 lie on the Cytoplasmic side of the membrane; it reads STSKNSGFTPADTVA. Residues 271–291 form a helical membrane-spanning segment; the sequence is IVFCSTHKSLTLGIPMLKIVF. Residues 292-298 are Extracellular-facing; sequence VGYEHLS. A helical membrane pass occupies residues 299 to 319; sequence LISVPLLIYHPAQILLGSVLV. At 320-343 the chain is on the cytoplasmic side; it reads PTIKSWMLSRQKALKLTRQPKIPL.

This sequence belongs to the bile acid:sodium symporter (BASS) (TC 2.A.28) family. As to expression, strongly expressed in small intestine. Moderately expressed in spleen. Weakly expressed in skeletal muscle. Not detected in other tissues tested.

The protein resides in the cell membrane. Its subcellular location is the endoplasmic reticulum membrane. It is found in the golgi apparatus membrane. In terms of biological role, involved in teeth and skeletal development. Has an essential role in the biosynthesis and trafficking of glycosaminoglycans and glycoproteins to produce a proper functioning extracellular matrix. Required for extracellular matrix mineralization. Also involved in the regulation of cellular calcium homeostasis. Does not show transport activity towards bile acids or steroid sulfates. In Xenopus laevis (African clawed frog), this protein is Sodium/bile acid cotransporter 7-A (slc10a7-a).